A 684-amino-acid polypeptide reads, in one-letter code: Phenoloxidase 2 (684 aa).

Positions 1 to 51 are cleaved as a propeptide — removed by PPAF1; that stretch reads MSNTAVLNDLVALYDRPTEPMFRVKAKKSFKVPKEYVTDRFKNVAVEISNR. Asn-81 and Asn-91 each carry an N-linked (GlcNAc...) asparagine glycan. Cu cation is bound by residues His-209, His-213, and His-238. N-linked (GlcNAc...) asparagine glycosylation is present at Asn-330. Glu-350 serves as the catalytic Proton acceptor. The Cu cation site is built by His-365, His-369, and His-405. Residues Asn-416, Asn-487, Asn-491, and Asn-546 are each glycosylated (N-linked (GlcNAc...) asparagine). Disulfide bonds link Cys-581/Cys-623 and Cys-583/Cys-630.

It belongs to the tyrosinase family. As to quaternary structure, dimer. Might form a homodimer or a heterodimer with PPO1. Might interact with PPAF2 (via CLIP domain); the interaction might be required for PPO2 activity. The cofactor is Cu(2+). In terms of processing, precursor cleaved by PPAF1. As to expression, hemocytes.

The protein resides in the secreted. This is a copper-containing oxidase that functions in the formation of pigments such as melanins and other polyphenolic compounds. Catalyzes the oxidation of o-diphenols (N-acetyldopamine, 4-methylcatechol and dopamine). Cannot oxidize monophenols and p-phenols (L-tyrosine, tyramine, gentisic acid and hydroquinone). Binds to the surface of hemocytes and is involved in hemocyte melanization. Activation of the enzyme in response to bacterial lipopolysaccharides (LPS) suggests it may play a role in innate immunity. In Holotrichia diomphalia (Korean black chafer), this protein is Phenoloxidase 2.